Reading from the N-terminus, the 35-residue chain is Protein YbgU (35 aa).

The polypeptide is Protein YbgU (Escherichia coli (strain K12)).